The primary structure comprises 402 residues: Phosphoglycerate kinase (402 aa).

Residues 24-26, R40, 63-66, R122, and R155 contribute to the substrate site; these read DFN and HFGR. Residues K206, G297, E328, and 357–360 contribute to the ATP site; that span reads GGDS.

It belongs to the phosphoglycerate kinase family. In terms of assembly, monomer.

The protein resides in the cytoplasm. The enzyme catalyses (2R)-3-phosphoglycerate + ATP = (2R)-3-phospho-glyceroyl phosphate + ADP. Its pathway is carbohydrate degradation; glycolysis; pyruvate from D-glyceraldehyde 3-phosphate: step 2/5. This Prochlorococcus marinus (strain MIT 9211) protein is Phosphoglycerate kinase.